We begin with the raw amino-acid sequence, 447 residues long: Cysteine--tRNA ligase (447 aa).

Zn(2+) is bound at residue Cys28. The 'HIGH' region motif lies at 30–40 (PTVYNYIHIGN). The Zn(2+) site is built by Cys211, His236, and Glu240. Positions 268 to 272 (KMSKS) match the 'KMSKS' region motif. Lys271 is an ATP binding site.

Belongs to the class-I aminoacyl-tRNA synthetase family. In terms of assembly, monomer. Requires Zn(2+) as cofactor.

Its subcellular location is the cytoplasm. It carries out the reaction tRNA(Cys) + L-cysteine + ATP = L-cysteinyl-tRNA(Cys) + AMP + diphosphate. The protein is Cysteine--tRNA ligase of Streptococcus agalactiae serotype V (strain ATCC BAA-611 / 2603 V/R).